Reading from the N-terminus, the 184-residue chain is Probable DNA-directed RNA polymerase subunit delta (184 aa).

Residues 14–82 (KSFIDMAHTL…GENNWGLRDW (69 aa)) enclose the HTH HARE-type domain. The segment at 114–184 (LLGEEEEEID…FNDDPDDDKI (71 aa)) is disordered. Over residues 117-184 (EEEEEIDDQE…FNDDPDDDKI (68 aa)) the composition is skewed to acidic residues.

The protein belongs to the RpoE family. RNAP is composed of a core of 2 alpha, a beta and a beta' subunits. The core is associated with a delta subunit and one of several sigma factors.

Functionally, participates in both the initiation and recycling phases of transcription. In the presence of the delta subunit, RNAP displays an increased specificity of transcription, a decreased affinity for nucleic acids, and an increased efficiency of RNA synthesis because of enhanced recycling. In Staphylococcus carnosus (strain TM300), this protein is Probable DNA-directed RNA polymerase subunit delta.